The chain runs to 84 residues: Translational regulator CsrA (84 aa).

This sequence belongs to the CsrA/RsmA family. As to quaternary structure, homodimer; the beta-strands of each monomer intercalate to form a hydrophobic core, while the alpha-helices form wings that extend away from the core.

It is found in the cytoplasm. Its function is as follows. A translational regulator that binds mRNA to regulate translation initiation and/or mRNA stability. Usually binds in the 5'-UTR at or near the Shine-Dalgarno sequence preventing ribosome-binding, thus repressing translation. Its main target seems to be the major flagellin gene, while its function is anatagonized by FliW. The protein is Translational regulator CsrA of Leptospira interrogans serogroup Icterohaemorrhagiae serovar Lai (strain 56601).